Reading from the N-terminus, the 103-residue chain is uncharacterized protein (103 aa).

Residues 1–103 (MAGARRRARC…WRGGSCTSQR (103 aa)) form a disordered region. The segment covering 35 to 44 (GSGQPRWWPW) has biased composition (low complexity). Composition is skewed to basic residues over residues 55–65 (RRPGPGRRARS) and 74–84 (RPPHSRTRARR).

Belongs to the epstein-barr virus RPMS1 family.

This is an uncharacterized protein from Homo sapiens (Human).